The chain runs to 530 residues: Serendipity locus protein alpha (530 aa).

Transient expression in blastoderm from nuclear cycle 11 to the onset of gastrulation.

The protein resides in the cytoplasm. The protein localises to the cell membrane. Functionally, required for the cellularization of the syncytial blastoderm embryo. Involved in the localization of the actin filaments just prior to and during plasma membrane invagination. Sry-alpha together with nullo and bnk may provide auxiliary functions, by acting both to stabilize a large and dynamic microfilament structure and regulate its functions. In Drosophila melanogaster (Fruit fly), this protein is Serendipity locus protein alpha (Sry-alpha).